Reading from the N-terminus, the 113-residue chain is uncharacterized protein (113 aa).

Disordered stretches follow at residues 1–22 (MGEH…PLAQ) and 90–113 (DGRH…SDDL). Over residues 90-99 (DGRHTTESSF) the composition is skewed to basic and acidic residues. Over residues 100-113 (EHSSPSRSPQSDDL) the composition is skewed to low complexity.

This is an uncharacterized protein from Mycobacterium tuberculosis (strain ATCC 25618 / H37Rv).